The primary structure comprises 328 residues: Putative thiosulfate sulfurtransferase mpst-1 (328 aa).

2 Rhodanese domains span residues 22 to 162 (NKEG…EVST) and 202 to 320 (KTSE…KKIS). The active-site Cysteine persulfide intermediate is cysteine 278.

It carries out the reaction thiosulfate + hydrogen cyanide = thiocyanate + sulfite + 2 H(+). In Caenorhabditis elegans, this protein is Putative thiosulfate sulfurtransferase mpst-1 (mpst-1).